The following is a 105-amino-acid chain: Nitrogen fixation nifHD region glnB-like protein 1 (105 aa).

This sequence belongs to the P(II) protein family.

In terms of biological role, could be involved in the regulation of nitrogen fixation. In Methanococcus maripaludis (strain DSM 14266 / JCM 13030 / NBRC 101832 / S2 / LL), this protein is Nitrogen fixation nifHD region glnB-like protein 1 (glnBI).